Reading from the N-terminus, the 469-residue chain is MNTNQRIITIGTICLIVGIISLLLQIGNIISLWISHSIQTREKNHPEVCNQSVITYENNTWVNQTYVNISNANIVAGQGVTSIILAGNSPLCPISGWAIYSKDNSIRIGSKGDIFVMREPFISCSHLECRTFFLTQGALLNDKHSNGTVKDRSPYRTLMSCPIGEAPSPYNSRFESVAWSASACHDGMGWLTIGISGPDNGAVAVLKYNGIITDTIKSWRNKILRTQESECVCINGSCFTIMTDGPSNGQASYKIFKMEKGRIIKSIELDAPNYHYEECSCYPDTGKVVCVCRDNWHASNRPWVSFDQNLNYQIGYICSGVFGDNPRSNDGKGNCGPVLSNGANGVKGFSFRYGNGVWIGRTKSISSRSGFEMIWDPNGWTETDSSFSMKQDIIASTDWSGYSGSFVQHPELTGMDCIRPCFWVELIRGQPKESTIWTSGSSISFCGVNSGTANWSWPDGADLPFTIDK.

Residues 1–6 (MNTNQR) are Intravirion-facing. The helical transmembrane segment at 7–27 (IITIGTICLIVGIISLLLQIG) threads the bilayer. An involved in apical transport and lipid raft association region spans residues 11-33 (GTICLIVGIISLLLQIGNIISLW). Residues 28-469 (NIISLWISHS…GADLPFTIDK (442 aa)) are Virion surface-facing. The tract at residues 36 to 90 (HSIQTREKNHPEVCNQSVITYENNTWVNQTYVNISNANIVAGQGVTSIILAGNSP) is hypervariable stalk region. Residues asparagine 50, asparagine 58, asparagine 63, and asparagine 68 are each glycosylated (N-linked (GlcNAc...) asparagine; by host). The tract at residues 91 to 469 (LCPISGWAIY…GADLPFTIDK (379 aa)) is head of neuraminidase. 8 cysteine pairs are disulfide-bonded: cysteine 92–cysteine 417, cysteine 124–cysteine 129, cysteine 184–cysteine 231, cysteine 233–cysteine 238, cysteine 279–cysteine 292, cysteine 281–cysteine 290, cysteine 318–cysteine 335, and cysteine 421–cysteine 446. Position 118 (arginine 118) interacts with substrate. A glycan (N-linked (GlcNAc...) asparagine; by host) is linked at asparagine 146. Aspartate 151 acts as the Proton donor/acceptor in catalysis. Residue arginine 152 coordinates substrate. N-linked (GlcNAc...) asparagine; by host glycosylation is present at asparagine 235. 277 to 278 (EE) serves as a coordination point for substrate. Substrate is bound at residue arginine 293. Residues aspartate 294, aspartate 324, and asparagine 344 each contribute to the Ca(2+) site. Residue arginine 368 participates in substrate binding. The active-site Nucleophile is tyrosine 402. N-linked (GlcNAc...) asparagine; by host glycosylation occurs at asparagine 454.

The protein belongs to the glycosyl hydrolase 34 family. In terms of assembly, homotetramer. The cofactor is Ca(2+). Post-translationally, N-glycosylated.

The protein localises to the virion membrane. The protein resides in the host apical cell membrane. It carries out the reaction Hydrolysis of alpha-(2-&gt;3)-, alpha-(2-&gt;6)-, alpha-(2-&gt;8)- glycosidic linkages of terminal sialic acid residues in oligosaccharides, glycoproteins, glycolipids, colominic acid and synthetic substrates.. With respect to regulation, inhibited by the neuraminidase inhibitors zanamivir (Relenza) and oseltamivir (Tamiflu). These drugs interfere with the release of progeny virus from infected cells and are effective against all influenza strains. Resistance to neuraminidase inhibitors is quite rare. Functionally, catalyzes the removal of terminal sialic acid residues from viral and cellular glycoconjugates. Cleaves off the terminal sialic acids on the glycosylated HA during virus budding to facilitate virus release. Additionally helps virus spread through the circulation by further removing sialic acids from the cell surface. These cleavages prevent self-aggregation and ensure the efficient spread of the progeny virus from cell to cell. Otherwise, infection would be limited to one round of replication. Described as a receptor-destroying enzyme because it cleaves a terminal sialic acid from the cellular receptors. May facilitate viral invasion of the upper airways by cleaving the sialic acid moieties on the mucin of the airway epithelial cells. Likely to plays a role in the budding process through its association with lipid rafts during intracellular transport. May additionally display a raft-association independent effect on budding. Plays a role in the determination of host range restriction on replication and virulence. Sialidase activity in late endosome/lysosome traffic seems to enhance virus replication. This chain is Neuraminidase, found in Influenza A virus (strain A/Swine/Wisconsin/1/1967 H1N1).